The primary structure comprises 655 residues: Putative sensor protein Sfri_3689 (655 aa).

Residues 1–17 (MKTLLLLLIIITMPVLA) form the signal peptide. A helical membrane pass occupies residues 252–272 (FALAILVAIMSAIGMIFTGFI). In terms of domain architecture, Histidine kinase spans 419-653 (GIAHEINNPT…QIRLIFALAQ (235 aa)). H422 is modified (phosphohistidine; by autocatalysis).

It is found in the cell membrane. It catalyses the reaction ATP + protein L-histidine = ADP + protein N-phospho-L-histidine.. In Shewanella frigidimarina (strain NCIMB 400), this protein is Putative sensor protein Sfri_3689.